The chain runs to 230 residues: Claudin-2 (230 aa).

Topologically, residues 1-7 (MASLGVQ) are cytoplasmic. Residues 8–28 (LVGYILGLLGLLGTSIAMLLP) form a helical membrane-spanning segment. The Extracellular portion of the chain corresponds to 29–81 (NWRTSSYVGASIVTAVGFSKGLWMECATHSTGITQCDIYSTLLGLPADIQAAQ). A disulfide bond links Cys54 and Cys64. A helical transmembrane segment spans residues 82–102 (AMMVTSSAMSSLACIISVVGM). Residues 103 to 116 (RCTVFCQDSRAKDR) are Cytoplasmic-facing. A helical membrane pass occupies residues 117–137 (VAVVGGVFFILGGILGFIPVA). Topologically, residues 138–162 (WNLHGILRDFYSPLVPDSMKFEIGE) are extracellular. The helical transmembrane segment at 163–183 (ALYLGIISALFSLVAGVILCF) threads the bilayer. Residues 184-230 (SCSPQGNRTNYYDGYQAQPLATRSSPRSAQQPKAKSEFNSYSLTGYV) lie on the Cytoplasmic side of the membrane. Residues 205–230 (TRSSPRSAQQPKAKSEFNSYSLTGYV) are disordered. Lys218 is covalently cross-linked (Glycyl lysine isopeptide (Lys-Gly) (interchain with G-Cter in SUMO)). A phosphoserine mark is found at Ser219 and Ser223. Residues 229 to 230 (YV) are interactions with TJP1, TJP2 and TJP3.

It belongs to the claudin family. In terms of assembly, can form homo- and heteropolymers with other claudins to mediate paracellular barrier and channel functions of tight junctions in response to physiological stimuli. Homopolymers interact with CLDN3, but not CLDN1, homopolymers. Directly interacts with TJP1/ZO-1, TJP2/ZO-2 and TJP3/ZO-3. In terms of processing, the disulfide bond is necessary for pore formation, but is not required for correct protein trafficking. Expressed in the kidney, liver and intestine, with higher levels in the ileum than in the jejunum. Low levels in the brain. Expressed in colonic epithelium (at protein level). Expressed in the perivenous regions, bile ducts, and gallbladder epithelium (at protein level).

The protein resides in the cell junction. It localises to the tight junction. The protein localises to the cell membrane. The enzyme catalyses Na(+)(in) = Na(+)(out). It catalyses the reaction K(+)(in) = K(+)(out). The catalysed reaction is Rb(+)(in) = Rb(+)(out). It carries out the reaction Li(+)(in) = Li(+)(out). The enzyme catalyses Cs(+)(in) = Cs(+)(out). It catalyses the reaction Ca(2+)(in) = Ca(2+)(out). The catalysed reaction is methylamine(out) = methylamine(in). It carries out the reaction choline(out) = choline(in). The enzyme catalyses H2O(in) = H2O(out). With respect to regulation, the channel permeability is down-regulated at acidic pH. In terms of biological role, forms paracellular channels: polymerizes in tight junction strands with cation- and water-selective channels through the strands, conveying epithelial permeability in a process known as paracellular tight junction permeability. In intestinal epithelium, allows for sodium and water fluxes from the peritoneal side to the lumen of the intestine to regulate nutrient absorption and clear enteric pathogens as part of mucosal immune response. In kidney, allows passive sodium and calcium reabsorption across proximal tubules from the lumen back to the bloodstream. In the hepatobiliary tract, allows paracellular water and cation fluxes in the hepatic perivenous areas and biliary epithelium to generate bile flow and maintain osmotic gradients. This is Claudin-2 from Mus musculus (Mouse).